Reading from the N-terminus, the 942-residue chain is Ubiquitin carboxyl-terminal hydrolase 33 (942 aa).

Residues 37–140 (NHCPHLDSVG…PSLPHVRQPH (104 aa)) form a UBP-type zinc finger. Zn(2+) is bound by residues C39, H41, C61, C64, C74, C79, C84, H91, H95, H101, C114, and C117. In terms of domain architecture, USP spans 185–715 (TGLKNIGNTC…EAYVLFYRKS (531 aa)). C194 acts as the Nucleophile in catalysis. Residues 294 to 357 (VEEDPQTITT…MLIQDDENNS (64 aa)) form a disordered region. Residues 315–327 (DVDFQSCESCSNS) are compositionally biased toward polar residues. Phosphoserine is present on S377. Residues 419-431 (DLSTPQILPSNEG) are compositionally biased toward polar residues. Residues 419-469 (DLSTPQILPSNEGVNPRLSASPPKSGNLWPGLAPPHKKAQSASPKRKKQHK) form a disordered region. Position 439 is a phosphoserine (S439). A compositionally biased stretch (basic residues) spans 453–469 (PHKKAQSASPKRKKQHK). The Proton acceptor role is filled by H673. 2 consecutive DUSP domains span residues 717-810 (EEAQ…LYIC) and 818-921 (EKIE…RPPV).

It belongs to the peptidase C19 family. USP20/USP33 subfamily. In terms of assembly, interacts with VHL, leading to its ubiquitination and subsequent degradation. Interacts with ARRB1 and ARRB2. Interacts with ADRB2. Interacts with DIO2. Interacts with ROBO1. Interacts with SELENBP1; in a selenium-dependent manner. Interacts with CCP110. Post-translationally, ubiquitinated via a VHL-dependent pathway for proteasomal degradation. In terms of tissue distribution, widely expressed.

It localises to the cytoplasm. It is found in the perinuclear region. Its subcellular location is the cytoskeleton. The protein resides in the microtubule organizing center. The protein localises to the centrosome. It localises to the golgi apparatus. It catalyses the reaction Thiol-dependent hydrolysis of ester, thioester, amide, peptide and isopeptide bonds formed by the C-terminal Gly of ubiquitin (a 76-residue protein attached to proteins as an intracellular targeting signal).. Deubiquitinating enzyme involved in various processes such as centrosome duplication, cellular migration and beta-2 adrenergic receptor/ADRB2 recycling. Involved in regulation of centrosome duplication by mediating deubiquitination of CCP110 in S and G2/M phase, leading to stabilize CCP110 during the period which centrioles duplicate and elongate. Involved in cell migration via its interaction with intracellular domain of ROBO1, leading to regulate the Slit signaling. Plays a role in commissural axon guidance cross the ventral midline of the neural tube in a Slit-dependent manner, possibly by mediating the deubiquitination of ROBO1. Acts as a regulator of G-protein coupled receptor (GPCR) signaling by mediating the deubiquitination of beta-arrestins (ARRB1 and ARRB2) and beta-2 adrenergic receptor (ADRB2). Plays a central role in ADRB2 recycling and resensitization after prolonged agonist stimulation by constitutively binding ADRB2, mediating deubiquitination of ADRB2 and inhibiting lysosomal trafficking of ADRB2. Upon dissociation, it is probably transferred to the translocated beta-arrestins, leading to beta-arrestins deubiquitination and disengagement from ADRB2. This suggests the existence of a dynamic exchange between the ADRB2 and beta-arrestins. Deubiquitinates DIO2, thereby regulating thyroid hormone regulation. Mediates deubiquitination of both 'Lys-48'- and 'Lys-63'-linked polyubiquitin chains. The polypeptide is Ubiquitin carboxyl-terminal hydrolase 33 (USP33) (Homo sapiens (Human)).